Consider the following 205-residue polypeptide: MRKRKLSDRVRCSARLKNRSCSGAHSSSDHEADTYGPKKKAVSSKNTDKKSPKKLENDEKGLMESDEQEFINKTDNTASNESNAGNVNTCPSASPFSDLNEVSRNGLTDDSEDGVGFSHKTSSEPSKVREVYLNGSPFVDEDSNQPMPLGLFFENADLMQDLPPAVPCCASMSRREFRNLHFRAKEEEEDDDDDYADGLVNEGNI.

Basic residues predominate over residues 1 to 18; it reads MRKRKLSDRVRCSARLKN. Disordered regions lie at residues 1–128 and 184–205; these read MRKR…PSKV and AKEE…EGNI. The span at 46 to 63 shows a compositional bias: basic and acidic residues; that stretch reads NTDKKSPKKLENDEKGLM. Residues 71-108 are compositionally biased toward polar residues; it reads INKTDNTASNESNAGNVNTCPSASPFSDLNEVSRNGLT. Acidic residues predominate over residues 187–196; the sequence is EEEDDDDDYA.

This sequence belongs to the UPF0688 family.

The protein localises to the nucleus. This chain is UPF0688 protein C1orf174 homolog, found in Xenopus laevis (African clawed frog).